A 116-amino-acid chain; its full sequence is Ribosome-binding factor A (116 aa).

The protein belongs to the RbfA family. In terms of assembly, monomer. Binds 30S ribosomal subunits, but not 50S ribosomal subunits or 70S ribosomes.

It localises to the cytoplasm. In terms of biological role, one of several proteins that assist in the late maturation steps of the functional core of the 30S ribosomal subunit. Associates with free 30S ribosomal subunits (but not with 30S subunits that are part of 70S ribosomes or polysomes). Required for efficient processing of 16S rRNA. May interact with the 5'-terminal helix region of 16S rRNA. The sequence is that of Ribosome-binding factor A from Streptococcus equi subsp. zooepidemicus (strain H70).